We begin with the raw amino-acid sequence, 587 residues long: L-ascorbate oxidase (587 aa).

The N-terminal stretch at 1-33 (MAKVADKPFFPKPFLSFLVLSIIFGFGITLSEA) is a signal peptide. Plastocyanin-like domains lie at 38 to 157 (IKHY…LIVD) and 169 to 335 (DEEI…NYLP). 3 disulfide bridges follow: C54–C236, C116–C574, and C215–C228. Cu cation-binding residues include H95, H97, H139, and H141. N-linked (GlcNAc...) asparagine glycosylation is found at N360, N401, and N475. The region spanning 379–559 (NRRLFLLNTQ…HMGMGVVFAE (181 aa)) is the Plastocyanin-like 3 domain. Residues H480, H483, H485, H542, C543, H544, H548, and M553 each contribute to the Cu cation site.

It belongs to the multicopper oxidase family. In terms of assembly, dimer. The cofactor is Cu cation.

It is found in the secreted. The catalysed reaction is 4 L-ascorbate + O2 = 4 monodehydro-L-ascorbate radical + 2 H2O. Functionally, may be involved in a redox system involving ascorbic acid. The protein is L-ascorbate oxidase of Cucumis sativus (Cucumber).